The primary structure comprises 639 residues: Kininogen-1 (639 aa).

The N-terminal stretch at 1-18 (MKLITILLLCSRLLPSLA) is a signal peptide. The Cystatin kininogen-type 1 domain maps to 28–132 (CNDESLFQAV…TQICNITPGK (105 aa)). 9 disulfides stabilise this stretch: Cys28–Cys609, Cys83–Cys94, Cys107–Cys126, Cys142–Cys145, Cys206–Cys218, Cys229–Cys248, Cys264–Cys267, Cys328–Cys340, and Cys351–Cys370. Asn82 carries N-linked (GlcNAc...) asparagine glycosylation. The region spanning 151–254 (VDSPELGPVL…SDSCEFYPGD (104 aa)) is the Cystatin kininogen-type 2 domain. Asn169 and Asn205 each carry an N-linked (GlcNAc...) asparagine glycan. The Cystatin kininogen-type 3 domain maps to 273–376 (VDSPELKEAL…TVKCKVLDMT (104 aa)). N-linked (GlcNAc...) asparagine glycosylation is present at Asn294. Ser332 bears the Phosphoserine mark. 2 disordered regions span residues 438–462 (NHQG…GHGH) and 476–547 (GYDH…LNPP). A compositionally biased stretch (basic residues) spans 482–502 (PVGHGHGQRHGHGHGHGHGRD). The span at 503–519 (KHTNKDKNNVKHTDQRR) shows a compositional bias: basic and acidic residues. Residues 522 to 537 (LTSSSEDNTTSTQIQG) show a composition bias toward polar residues. Residue Asn529 is glycosylated (N-linked (GlcNAc...) asparagine).

Bradykinin is released from kininogen by plasma kallikrein. Post-translationally, phosphorylated by FAM20C in the extracellular medium. In terms of processing, bradykinin is inactivated by ACE, which removes the dipeptide Arg-Phe from its C-terminus. In terms of tissue distribution, plasma.

It localises to the secreted. It is found in the extracellular space. Its function is as follows. Kininogens are inhibitors of thiol proteases. HMW-kininogen plays an important role in blood coagulation by helping to position optimally prekallikrein and factor XI next to factor XII; HMW-kininogen inhibits the thrombin- and plasmin-induced aggregation of thrombocytes. LMW-kininogen inhibits the aggregation of thrombocytes. LMW-kininogen is in contrast to HMW-kininogen not involved in blood clotting. The active peptide bradykinin is a potent vasodilatator that is released from HMW-kininogen shows a variety of physiological effects: (A) influence in smooth muscle contraction, (B) induction of hypotension, (C) natriuresis and diuresis, (D) decrease in blood glucose level, (E) it is a mediator of inflammation and causes (E1) increase in vascular permeability, (E2) stimulation of nociceptors (4E3) release of other mediators of inflammation (e.g. prostaglandins), (F) it has a cardioprotective effect (directly via bradykinin action, indirectly via endothelium-derived relaxing factor action). The sequence is that of Kininogen-1 (Kng1) from Rattus norvegicus (Rat).